The chain runs to 343 residues: tRNA N6-adenosine threonylcarbamoyltransferase (343 aa).

Residues His115 and His119 each coordinate Fe cation. Substrate-binding positions include 137-141 (LVSGG), Asp170, Gly183, Asp187, and Asn276. Fe cation is bound at residue Asp306.

Belongs to the KAE1 / TsaD family. Requires Fe(2+) as cofactor.

The protein resides in the cytoplasm. It catalyses the reaction L-threonylcarbamoyladenylate + adenosine(37) in tRNA = N(6)-L-threonylcarbamoyladenosine(37) in tRNA + AMP + H(+). Required for the formation of a threonylcarbamoyl group on adenosine at position 37 (t(6)A37) in tRNAs that read codons beginning with adenine. Is involved in the transfer of the threonylcarbamoyl moiety of threonylcarbamoyl-AMP (TC-AMP) to the N6 group of A37, together with TsaE and TsaB. TsaD likely plays a direct catalytic role in this reaction. The protein is tRNA N6-adenosine threonylcarbamoyltransferase of Limosilactobacillus reuteri (strain DSM 20016) (Lactobacillus reuteri).